A 389-amino-acid polypeptide reads, in one-letter code: Succinate--CoA ligase [ADP-forming] subunit beta (389 aa).

Positions 9-244 (KELLRQFNVP…IDEEDAAEIE (236 aa)) constitute an ATP-grasp domain. ATP contacts are provided by residues lysine 46, 53-55 (GRG), glutamate 99, alanine 102, and glutamate 107. Residues asparagine 199 and aspartate 213 each contribute to the Mg(2+) site. Residues asparagine 264 and 321-323 (GIM) each bind substrate.

The protein belongs to the succinate/malate CoA ligase beta subunit family. Heterotetramer of two alpha and two beta subunits. It depends on Mg(2+) as a cofactor.

The enzyme catalyses succinate + ATP + CoA = succinyl-CoA + ADP + phosphate. It carries out the reaction GTP + succinate + CoA = succinyl-CoA + GDP + phosphate. Its pathway is carbohydrate metabolism; tricarboxylic acid cycle; succinate from succinyl-CoA (ligase route): step 1/1. Its function is as follows. Succinyl-CoA synthetase functions in the citric acid cycle (TCA), coupling the hydrolysis of succinyl-CoA to the synthesis of either ATP or GTP and thus represents the only step of substrate-level phosphorylation in the TCA. The beta subunit provides nucleotide specificity of the enzyme and binds the substrate succinate, while the binding sites for coenzyme A and phosphate are found in the alpha subunit. The chain is Succinate--CoA ligase [ADP-forming] subunit beta from Polynucleobacter necessarius subsp. necessarius (strain STIR1).